Consider the following 250-residue polypeptide: uncharacterized protein (250 aa).

Positions 1 to 25 are cleaved as a signal peptide; it reads MKTLRTLCVLMILSGVIFFGLKIDA.

This is an uncharacterized protein from Bacillus subtilis (strain 168).